Consider the following 396-residue polypeptide: MSSQQIRLATRGSDLALRQAGEVVDTLEDRRHDVELVEVETEGDRVTDALISDLGKTGAFVRALDQEVMEGTVDAAVHSMKDVPTEVPEDLVVAAVPHRENPADVLVTPDGTDLEDLPAGSVVGTASLRRGAQVQAHRPGLDVEPIRGNVGTRVEKLLAPALHREHERRTEAEKEAQSRDAREQRRGDYTADIEAGVENLDTEDGEEGAADDGDDTASSSEFEQSVTEWFDSLTPLQQSAMERDPDTEYDALVMARVGLERTGLLHHVGIEELSTGTHVPATGQGALCVTARRDSDVVDTLRDALEHVRTRVEVTAERVVLEELGGGCIAPIGVHALVQGDTIRTAVQVFSQDGSEQVGETRELDAEQYATDARELAADLRDRGAADLIEDARTEA.

Residues 159 to 224 (APALHREHER…DTASSSEFEQ (66 aa)) are disordered. Residues 159–245 (APALHREHER…LQQSAMERDP (87 aa)) are insert. The span at 162 to 189 (LHREHERRTEAEKEAQSRDAREQRRGDY) shows a compositional bias: basic and acidic residues. Positions 200-215 (LDTEDGEEGAADDGDD) are enriched in acidic residues. Residue C328 is modified to S-(dipyrrolylmethanemethyl)cysteine.

The protein belongs to the HMBS family. The cofactor is dipyrromethane.

It carries out the reaction 4 porphobilinogen + H2O = hydroxymethylbilane + 4 NH4(+). The protein operates within porphyrin-containing compound metabolism; protoporphyrin-IX biosynthesis; coproporphyrinogen-III from 5-aminolevulinate: step 2/4. In terms of biological role, tetrapolymerization of the monopyrrole PBG into the hydroxymethylbilane pre-uroporphyrinogen in several discrete steps. In Halobacterium salinarum (strain ATCC 700922 / JCM 11081 / NRC-1) (Halobacterium halobium), this protein is Probable porphobilinogen deaminase (hemC).